The following is a 66-amino-acid chain: MVLRQLSRQASVKVGKTWTGTKKRAQRIFIFILELLLEFCRGEDSVDGKNKSTTALPAVKDSVKDS.

Topologically, residues 1-27 are cytoplasmic; the sequence is MVLRQLSRQASVKVGKTWTGTKKRAQR. 2 positions are modified to phosphoserine; by host: Ser-7 and Ser-11. A Phosphothreonine; by host modification is found at Thr-21. Residues 28 to 44 traverse the membrane as a helical; Signal-anchor for type II membrane protein segment; that stretch reads IFIFILELLLEFCRGED. The Extracellular portion of the chain corresponds to 45-66; that stretch reads SVDGKNKSTTALPAVKDSVKDS.

Belongs to the polyomavirus agnoprotein family. In terms of assembly, homooligomer. Interacts with VP1. Interacts with large T antigen; this interaction may impact upon the activity of T-antigen on the control of viral gene transcription and replication. Interacts with small t antigen. Interacts with host CBX5; this interaction induces the dissociation of CBX5 from LBR, resulting in destabilization of the nuclear envelope. Post-translationally, phosphorylated by host PKC. Phosphorylation alters the stability and may also have an impact on the subcellular location.

It is found in the host cytoplasm. It localises to the host nucleus membrane. The protein resides in the host rough endoplasmic reticulum membrane. Its subcellular location is the host cell membrane. Functionally, alters the structure of the nuclear envelope by interacting with host CBX5 and disrupting CBX5 association with LBR. Involved in the perinuclear-nuclear localization of the capsid protein VP1 during virion assembly and maturation. Plays an important role in the release of progeny virions from infected cells and in viral propagation, probably by acting as a viral ionic channel in the host plasma membrane. Allows influx of extracellular calcium ions in the host cell. May contribute to viral genome transcription and translation of viral late proteins. The chain is Agnoprotein from Homo sapiens (Human).